We begin with the raw amino-acid sequence, 95 residues long: UPF0223 protein Bsph_1378 (95 aa).

This sequence belongs to the UPF0223 family.

This is UPF0223 protein Bsph_1378 from Lysinibacillus sphaericus (strain C3-41).